The following is a 953-amino-acid chain: 26S proteasome non-ATPase regulatory subunit 1 (953 aa).

Position 1 is an N-acetylmethionine (Met1). Position 273 is a phosphothreonine (Thr273). Residues 279–318 form a disordered region; it reads PGSTNTGTVPGSEKDSDSMETEEKTSSAFVGKTPEASPEP. Position 290 is a phosphoserine (Ser290). Positions 290–303 are enriched in basic and acidic residues; the sequence is SEKDSDSMETEEKT. Lys310 bears the N6-acetyllysine mark. The residue at position 311 (Thr311) is a Phosphothreonine. The residue at position 315 (Ser315) is a Phosphoserine. PC repeat units lie at residues 403–436, 441–474, 476–510, 511–545, 547–580, 581–616, 617–649, 651–685, 686–726, and 729–761; these read TATA…PGSA, GGLY…DIVR, GGSL…VTGE, AAGL…EKIL, GLAV…ILRR, SGMY…DVRR, AAVE…PHVR, GAAM…YVRQ, GALI…DVMA, and GAIL…PSVV. The residue at position 720 (Lys720) is an N6-acetyllysine. Thr830 carries the phosphothreonine modification. Ser834 bears the Phosphoserine mark. 2 disordered regions span residues 839 to 881 and 930 to 953; these read AKKK…LDNP and AHGP…YIDD. Basic and acidic residues-rich tracts occupy residues 842–852 and 859–872; these read KEKEKEKKEEE and AEKK…KEPE. Residues 936-953 show a composition bias toward acidic residues; it reads EEEEQEPEPPEPFEYIDD.

It belongs to the proteasome subunit S1 family. As to quaternary structure, component of the 19S proteasome regulatory particle complex. The 26S proteasome consists of a 20S core particle (CP) and two 19S regulatory subunits (RP). The regulatory particle is made of a lid composed of 9 subunits, a base containing 6 ATPases and few additional components including PSMD1. Interacts with ADRM1. Interacts with ZFAND1.

In terms of biological role, component of the 26S proteasome, a multiprotein complex involved in the ATP-dependent degradation of ubiquitinated proteins. This complex plays a key role in the maintenance of protein homeostasis by removing misfolded or damaged proteins, which could impair cellular functions, and by removing proteins whose functions are no longer required. Therefore, the proteasome participates in numerous cellular processes, including cell cycle progression, apoptosis, or DNA damage repair. The sequence is that of 26S proteasome non-ATPase regulatory subunit 1 (PSMD1) from Homo sapiens (Human).